Reading from the N-terminus, the 115-residue chain is MLLKSTTRHIRIFAGTVENNELVPDDQALTLDIDPDNELNWNDTAVEQVYRKFDELVESYSGSDLTEYNLRCMGSDLEHFVRSLLQSGEISYNLGSRVNNYSLGLPRVDVDAEAK.

Belongs to the complex I NdhM subunit family. In terms of assembly, NDH-1 can be composed of about 15 different subunits; different subcomplexes with different compositions have been identified which probably have different functions.

It localises to the cellular thylakoid membrane. The enzyme catalyses a plastoquinone + NADH + (n+1) H(+)(in) = a plastoquinol + NAD(+) + n H(+)(out). The catalysed reaction is a plastoquinone + NADPH + (n+1) H(+)(in) = a plastoquinol + NADP(+) + n H(+)(out). In terms of biological role, NDH-1 shuttles electrons from an unknown electron donor, via FMN and iron-sulfur (Fe-S) centers, to quinones in the respiratory and/or the photosynthetic chain. The immediate electron acceptor for the enzyme in this species is believed to be plastoquinone. Couples the redox reaction to proton translocation, and thus conserves the redox energy in a proton gradient. Cyanobacterial NDH-1 also plays a role in inorganic carbon-concentration. This is NAD(P)H-quinone oxidoreductase subunit M from Trichodesmium erythraeum (strain IMS101).